Here is a 290-residue protein sequence, read N- to C-terminus: Ribonuclease HIII (290 aa).

The RNase H type-2 domain maps to 78–290 (LPLIGTDEVG…FKNTEKAKNA (213 aa)). Asp84, Glu85, and Asp187 together coordinate a divalent metal cation.

This sequence belongs to the RNase HII family. RnhC subfamily. It depends on Mn(2+) as a cofactor. Requires Mg(2+) as cofactor.

The protein localises to the cytoplasm. The catalysed reaction is Endonucleolytic cleavage to 5'-phosphomonoester.. Functionally, endonuclease that specifically degrades the RNA of RNA-DNA hybrids. The protein is Ribonuclease HIII of Streptococcus pneumoniae serotype 2 (strain D39 / NCTC 7466).